The primary structure comprises 317 residues: Acetyl-coenzyme A carboxylase carboxyl transferase subunit alpha (317 aa).

Positions 40–293 (LEVRVREAIV…GDVIASALAE (254 aa)) constitute a CoA carboxyltransferase C-terminal domain.

The protein belongs to the AccA family. Acetyl-CoA carboxylase is a heterohexamer composed of biotin carboxyl carrier protein (AccB), biotin carboxylase (AccC) and two subunits each of ACCase subunit alpha (AccA) and ACCase subunit beta (AccD).

It localises to the cytoplasm. The enzyme catalyses N(6)-carboxybiotinyl-L-lysyl-[protein] + acetyl-CoA = N(6)-biotinyl-L-lysyl-[protein] + malonyl-CoA. It participates in lipid metabolism; malonyl-CoA biosynthesis; malonyl-CoA from acetyl-CoA: step 1/1. Its function is as follows. Component of the acetyl coenzyme A carboxylase (ACC) complex. First, biotin carboxylase catalyzes the carboxylation of biotin on its carrier protein (BCCP) and then the CO(2) group is transferred by the carboxyltransferase to acetyl-CoA to form malonyl-CoA. The sequence is that of Acetyl-coenzyme A carboxylase carboxyl transferase subunit alpha from Rhizobium johnstonii (strain DSM 114642 / LMG 32736 / 3841) (Rhizobium leguminosarum bv. viciae).